The primary structure comprises 458 residues: Argininosuccinate lyase (458 aa).

This sequence belongs to the lyase 1 family. Argininosuccinate lyase subfamily.

It localises to the cytoplasm. The enzyme catalyses 2-(N(omega)-L-arginino)succinate = fumarate + L-arginine. The protein operates within amino-acid biosynthesis; L-arginine biosynthesis; L-arginine from L-ornithine and carbamoyl phosphate: step 3/3. This Geobacter sulfurreducens (strain ATCC 51573 / DSM 12127 / PCA) protein is Argininosuccinate lyase.